The following is a 133-amino-acid chain: Small ribosomal subunit protein uS8 (133 aa).

This sequence belongs to the universal ribosomal protein uS8 family. In terms of assembly, part of the 30S ribosomal subunit. Contacts proteins S5 and S12.

One of the primary rRNA binding proteins, it binds directly to 16S rRNA central domain where it helps coordinate assembly of the platform of the 30S subunit. The protein is Small ribosomal subunit protein uS8 of Microcystis aeruginosa (strain NIES-843 / IAM M-2473).